The sequence spans 298 residues: Osmoprotective compounds uptake permease protein GgtD (298 aa).

7 helical membrane passes run 26 to 46, 97 to 117, 126 to 146, 158 to 178, 207 to 227, 231 to 251, and 263 to 283; these read IHIA…GLFI, IAVP…YAFA, LLFI…LIPV, TFLG…IYLL, LIVP…FLWV, LLVA…TIQL, and YLLT…FFGL. The ABC transmembrane type-1 domain occupies 91 to 283; that stretch reads FLNSLTIAVP…IVPLMVFFGL (193 aa).

It belongs to the binding-protein-dependent transport system permease family. In terms of assembly, the complex is composed of two ATP-binding proteins (GgtA), two transmembrane proteins (GgtC and GgtD) and a solute-binding protein (GgtB).

The protein localises to the cell membrane. Its function is as follows. Part of the ABC transporter complex GgtABCD involved in the uptake of the osmoprotective compounds glucosylglycerol (GG), sucrose and trehalose. Responsible for the translocation of the substrate across the membrane. This Synechocystis sp. (strain ATCC 27184 / PCC 6803 / Kazusa) protein is Osmoprotective compounds uptake permease protein GgtD.